The chain runs to 93 residues: Uteroglobin (93 aa).

Positions 1-17 (MKLAITIILVMLSVCYS) are cleaved as a signal peptide.

Belongs to the secretoglobin family. Antiparallel homodimer; disulfide-linked. Interaction with LMBR1L is controversial.

Its subcellular location is the secreted. Its function is as follows. Binds phosphatidylcholine, phosphatidylinositol, polychlorinated biphenyls (PCB) and weakly progesterone, potent inhibitor of phospholipase A2. The chain is Uteroglobin (SCGB1A1) from Neotomodon alstoni (Mexican volcano mouse).